The primary structure comprises 493 residues: MFS-type transporter efuF (493 aa).

11 helical membrane passes run 90–110, 117–137, 147–167, 179–199, 211–231, 279–299, 316–336, 343–363, 370–390, 406–426, and 435–455; these read ITLVLFYVTFCLLDVPANMLL, IMLPTLMMGWGSMTLIQCAVH, LLMGAFEAGFMAGVVYYLTTF, IFYGAATIAGAFSGLLAYGVF, FLMIIEGSATILLASFAYWHL, IALYAVIGISYGVASASVGNF, LYTVAPYCVGCVILLAQCTSS, STHLAGAMLLTFVGFILLITL, GPTYFACFLLAAGAFTPSCIF, AVTGFMVGASNSGGIISSLAF, and IPALIVTATFQGVGIVLVLGF.

This sequence belongs to the major facilitator superfamily.

Its subcellular location is the membrane. MFS-type transporter; part of the gene cluster that mediates the biosynthesis of enfumafungin, a glycosylated fernene-type triterpenoid with potent antifungal activity, mediated by its interaction with beta-1,3-glucan synthase and the fungal cell wall. Might facilitate the transport of glucose units to the subcellular site of enfumafungin biosynthesis. This Hormonema carpetanum protein is MFS-type transporter efuF.